Consider the following 217-residue polypeptide: Large ribosomal subunit protein uL1 (217 aa).

At Ser2 the chain carries N-acetylserine. Phosphotyrosine is present on Tyr11. An N6-acetyllysine mark is found at Lys91 and Lys106. Lys118 carries the post-translational modification N6-acetyllysine; alternate. Residue Lys118 forms a Glycyl lysine isopeptide (Lys-Gly) (interchain with G-Cter in SUMO1); alternate linkage. A Glycyl lysine isopeptide (Lys-Gly) (interchain with G-Cter in SUMO2); alternate cross-link involves residue Lys118. Lys161 participates in a covalent cross-link: Glycyl lysine isopeptide (Lys-Gly) (interchain with G-Cter in SUMO2).

Belongs to the universal ribosomal protein uL1 family. In terms of assembly, component of the large ribosomal subunit.

The protein localises to the cytoplasm. In terms of biological role, component of the large ribosomal subunit. The ribosome is a large ribonucleoprotein complex responsible for the synthesis of proteins in the cell. This is Large ribosomal subunit protein uL1 (Rpl10a) from Mus musculus (Mouse).